The following is a 101-amino-acid chain: Putative pterin-4-alpha-carbinolamine dehydratase (101 aa).

It belongs to the pterin-4-alpha-carbinolamine dehydratase family.

It catalyses the reaction (4aS,6R)-4a-hydroxy-L-erythro-5,6,7,8-tetrahydrobiopterin = (6R)-L-erythro-6,7-dihydrobiopterin + H2O. This chain is Putative pterin-4-alpha-carbinolamine dehydratase, found in Rhizobium rhizogenes (strain K84 / ATCC BAA-868) (Agrobacterium radiobacter).